The primary structure comprises 379 residues: Cytochrome b (379 aa).

Helical transmembrane passes span 33–53, 77–98, 113–133, and 178–198; these read FGSLLGLCLIIQIASGLFLDM, WLIRYIHANGASLFFVCLYLHI, WNIGIILLFLTMATAFMGYVL, and FFAFHFILPFIIAAMAMVHLL. Heme b contacts are provided by histidine 83 and histidine 97. The heme b site is built by histidine 182 and histidine 196. Position 201 (histidine 201) interacts with a ubiquinone. Helical transmembrane passes span 226–246, 288–308, 320–340, and 347–367; these read TKDFLGIVLLLTFFFTMVPFF, LGGVIALILSILILALLPHIQ, ISQFLFWLLVSDVLVLTWIGG, and FIIIGQIASLSYFTIILVLMP.

Belongs to the cytochrome b family. In terms of assembly, the cytochrome bc1 complex contains 11 subunits: 3 respiratory subunits (MT-CYB, CYC1 and UQCRFS1), 2 core proteins (UQCRC1 and UQCRC2) and 6 low-molecular weight proteins (UQCRH/QCR6, UQCRB/QCR7, UQCRQ/QCR8, UQCR10/QCR9, UQCR11/QCR10 and a cleavage product of UQCRFS1). This cytochrome bc1 complex then forms a dimer. It depends on heme b as a cofactor.

It localises to the mitochondrion inner membrane. Functionally, component of the ubiquinol-cytochrome c reductase complex (complex III or cytochrome b-c1 complex) that is part of the mitochondrial respiratory chain. The b-c1 complex mediates electron transfer from ubiquinol to cytochrome c. Contributes to the generation of a proton gradient across the mitochondrial membrane that is then used for ATP synthesis. In Dipodomys nelsoni (Nelson's kangaroo rat), this protein is Cytochrome b (MT-CYB).